A 607-amino-acid polypeptide reads, in one-letter code: Autophagy-related protein 16-1 (607 aa).

Residues Trp-13–Leu-43 form an interaction with ATG5 region. A coiled-coil region spans residues Asp-79–Glu-230. Ser-139 is modified (phosphoserine). Positions Ala-207–Glu-230 are WIPI2-binding. The segment at Glu-230 to Val-242 is RB1CC1-binding. Ser-269 and Ser-287 each carry phosphoserine. The Caspase cleavage motif lies at Asp-296–Asp-299. WD repeat units follow at residues Ala-320–Lys-359, Gly-364–Thr-403, Gly-406–Thr-445, Phe-447–Glu-484, Glu-486–Thr-525, Lys-532–Ser-573, and Gln-575–Pro-607.

The protein belongs to the WD repeat ATG16 family. As to quaternary structure, homodimer. Homooligomer. Heterooligomer with ATG16L2. Interacts with WIPI1. Interacts with WIPI2. Interacts with RB1CC1; the interaction is required for ULK1 complex-dependent autophagy. Interacts with ATG5. Part of the minor complex composed of 4 sets of ATG12-ATG5 and ATG16L1 (400 kDa); this complex interacts with ATG3 leading to disruption of ATG7 interaction and promotion of ATG8-like proteins lipidation. Part of the major complex composed of 8 sets of ATG12-ATG5 and ATG16L1 (800 kDa). Interacts with RAB33B (GTP- and GDP-bound forms); the complex consists of a tetramer where two RAB33B molecules bind independently one molecule of the ATG16L1 homodimer; the interaction promotes ATG12-ATG5-ATG16L1 complex recruitment to phagophores. Interacts (via WD repeats) with TMEM59; the interaction mediates unconventional autophagic activity of TMEM59. Interacts with TLR2. Interacts (via WD repeats) with MEFV. Interacts (via N-terminal) with CLTC. Interacts with NOD1. Interacts with NOD2. Interacts with TUFM. Interacts with TRIM16. Interacts (via WD repeats) with SPATA33. Interacts with Irgm1. In terms of processing, proteolytic cleavage by activated CASP3 leads to degradation and may regulate autophagy upon cellular stress and apoptotic stimuli. Phosphorylation at Ser-139 promotes association with the ATG12-ATG5 conjugate to form the ATG12-ATG5-ATG16L1 complex. Widely expressed. Expressed in the testis and sperm midpiece (at protein level). As to expression, expressed in liver. In terms of tissue distribution, highly expressed in liver. Expressed in brain.

Its subcellular location is the cytoplasm. It is found in the preautophagosomal structure membrane. The protein localises to the endosome membrane. The protein resides in the lysosome membrane. Its function is as follows. Plays an essential role in both canonical and non-canonical autophagy: interacts with ATG12-ATG5 to mediate the lipidation to ATG8 family proteins (MAP1LC3A, MAP1LC3B, MAP1LC3C, GABARAPL1, GABARAPL2 and GABARAP). Acts as a molecular hub, coordinating autophagy pathways via distinct domains that support either canonical or non-canonical signaling. During canonical autophagy, interacts with ATG12-ATG5 to mediate the conjugation of phosphatidylethanolamine (PE) to ATG8 proteins, to produce a membrane-bound activated form of ATG8. Thereby, controls the elongation of the nascent autophagosomal membrane. As part of the ATG8 conjugation system with ATG5 and ATG12, required for recruitment of LRRK2 to stressed lysosomes and induction of LRRK2 kinase activity in response to lysosomal stress. Also involved in non-canonical autophagy, a parallel pathway involving conjugation of ATG8 proteins to single membranes at endolysosomal compartments, probably by catalyzing conjugation of phosphatidylserine (PS) to ATG8. Non-canonical autophagy plays a key role in epithelial cells to limit lethal infection by influenza A (IAV) virus. Regulates mitochondrial antiviral signaling (MAVS)-dependent type I interferon (IFN-I) production. Negatively regulates NOD1- and NOD2-driven inflammatory cytokine response. Instead, promotes an autophagy-dependent antibacterial pathway together with NOD1 or NOD2. Plays a role in regulating morphology and function of Paneth cell. The chain is Autophagy-related protein 16-1 from Mus musculus (Mouse).